A 484-amino-acid chain; its full sequence is Arginyl-tRNA--protein transferase 1 (484 aa).

Belongs to the R-transferase family.

It catalyses the reaction an N-terminal L-alpha-aminoacyl-[protein] + L-arginyl-tRNA(Arg) = an N-terminal L-arginyl-L-aminoacyl-[protein] + tRNA(Arg) + H(+). Involved in the post-translational conjugation of arginine to the N-terminal aspartate or glutamate of a protein. This arginylation is required for degradation of the protein via the ubiquitin pathway. Does not arginylate cysteine residues. The polypeptide is Arginyl-tRNA--protein transferase 1 (Ate1) (Drosophila melanogaster (Fruit fly)).